Reading from the N-terminus, the 75-residue chain is UPF0352 protein YejL (75 aa).

It belongs to the UPF0352 family.

In Escherichia coli O139:H28 (strain E24377A / ETEC), this protein is UPF0352 protein YejL.